Consider the following 671-residue polypeptide: K(+)-insensitive pyrophosphate-energized proton pump (671 aa).

Helical transmembrane passes span 3–23, 57–77, 79–99, 128–148, and 156–176; these read SLIF…AFFA, TIAV…DDGL, IAIG…IGMS, AVTG…FYIL, and VGFG…GGIF. Lysine 178 is a binding site for substrate. 4 residues coordinate Mg(2+): aspartate 181, aspartate 185, asparagine 208, and aspartate 211. Transmembrane regions (helical) follow at residues 223–243, 249–269, 285–305, 310–330, 366–386, and 391–411; these read LFET…LIIG, ILYP…SVFF, GVGG…NSLM, LFYA…ITEY, LVPT…VGGA, and IGLY…GMIV. Aspartate 421 is a binding site for Mg(2+). Transmembrane regions (helical) follow at residues 452–472, 490–510, 558–578, and 580–600; these read AVTK…LFAD, VVLA…AVTM, MAMP…ILGP, and ALAG…LMMD. Positions 607, 633, and 637 each coordinate Ca(2+). Lysine 640 contacts substrate. Residues 646-666 form a helical membrane-spanning segment; it reads ALNALIKVVNMVAILFSSLII.

Belongs to the H(+)-translocating pyrophosphatase (TC 3.A.10) family. K(+)-insensitive subfamily. Homodimer. Mg(2+) serves as cofactor.

The protein localises to the cell membrane. It carries out the reaction diphosphate + H2O + H(+)(in) = 2 phosphate + 2 H(+)(out). Functionally, proton pump that utilizes the energy of pyrophosphate hydrolysis as the driving force for proton movement across the membrane. Generates a proton motive force. This chain is K(+)-insensitive pyrophosphate-energized proton pump, found in Methanosarcina acetivorans (strain ATCC 35395 / DSM 2834 / JCM 12185 / C2A).